Reading from the N-terminus, the 135-residue chain is Large-conductance mechanosensitive channel (135 aa).

2 helical membrane-spanning segments follow: residues 10–30 (FAMKGNVVDMAVGVIIGAAFG) and 76–96 (GAFIQTVFDFAIVAFAIFCAI).

Belongs to the MscL family. As to quaternary structure, homopentamer.

It is found in the cell inner membrane. Channel that opens in response to stretch forces in the membrane lipid bilayer. May participate in the regulation of osmotic pressure changes within the cell. This is Large-conductance mechanosensitive channel from Proteus mirabilis (strain HI4320).